A 515-amino-acid chain; its full sequence is 2,3-bisphosphoglycerate-independent phosphoglycerate mutase (515 aa).

D14 and S64 together coordinate Mn(2+). The active-site Phosphoserine intermediate is the S64. Residues H125, 155-156, R187, R193, 263-266, and K337 contribute to the substrate site; these read RD and RADR. D404, H408, D445, H446, and H464 together coordinate Mn(2+).

This sequence belongs to the BPG-independent phosphoglycerate mutase family. As to quaternary structure, monomer. Requires Mn(2+) as cofactor.

It carries out the reaction (2R)-2-phosphoglycerate = (2R)-3-phosphoglycerate. It functions in the pathway carbohydrate degradation; glycolysis; pyruvate from D-glyceraldehyde 3-phosphate: step 3/5. Catalyzes the interconversion of 2-phosphoglycerate and 3-phosphoglycerate. The protein is 2,3-bisphosphoglycerate-independent phosphoglycerate mutase of Pseudomonas paraeruginosa (strain DSM 24068 / PA7) (Pseudomonas aeruginosa (strain PA7)).